Here is a 476-residue protein sequence, read N- to C-terminus: Sulfate adenylyltransferase subunit 1 (476 aa).

In terms of domain architecture, tr-type G spans 24–241 (KSLLRFLTCG…EDVDFVQEQE (218 aa)). Residues 33 to 40 (GSVDDGKS) are G1. Residue 33–40 (GSVDDGKS) coordinates GTP. The segment at 91–95 (GITID) is G2. Residues 112–115 (DTPG) are G3. GTP-binding positions include 112-116 (DTPGH) and 167-170 (NKMD). Residues 167 to 170 (NKMD) form a G4 region. The tract at residues 205–207 (SAL) is G5.

This sequence belongs to the TRAFAC class translation factor GTPase superfamily. Classic translation factor GTPase family. CysN/NodQ subfamily. As to quaternary structure, heterodimer composed of CysD, the smaller subunit, and CysN.

It catalyses the reaction sulfate + ATP + H(+) = adenosine 5'-phosphosulfate + diphosphate. It participates in sulfur metabolism; hydrogen sulfide biosynthesis; sulfite from sulfate: step 1/3. In terms of biological role, with CysD forms the ATP sulfurylase (ATPS) that catalyzes the adenylation of sulfate producing adenosine 5'-phosphosulfate (APS) and diphosphate, the first enzymatic step in sulfur assimilation pathway. APS synthesis involves the formation of a high-energy phosphoric-sulfuric acid anhydride bond driven by GTP hydrolysis by CysN coupled to ATP hydrolysis by CysD. The polypeptide is Sulfate adenylyltransferase subunit 1 (Photobacterium profundum (strain SS9)).